A 611-amino-acid polypeptide reads, in one-letter code: Dual specificity protein phosphatase CDC14AB (611 aa).

The tract at residues 23 to 178 (DLLGASEFIK…ALQHGFLNFE (156 aa)) is a. The linker stretch occupies residues 179–192 (TFDVNEYEHYERVE). The segment at 193–359 (NGDLNWITPG…HGDSLRSKQR (167 aa)) is b. The 159-residue stretch at 194–352 (GDLNWITPGK…KQASLWAHGD (159 aa)) folds into the Tyrosine-protein phosphatase domain. Cys294 acts as the Phosphocysteine intermediate in catalysis. Residues 408 to 611 (KLRALKGRRQ…PSLQSEYVQY (204 aa)) are disordered. The span at 456 to 490 (SPLKSSKVPASSSSSSSSSSVSASAKRIGRSSSSS) shows a compositional bias: low complexity. The segment covering 491-511 (TNLKSTRLASSLGNLYEPNTE) has biased composition (polar residues). Residues 512–553 (SISSGKPPSPSSFTPHPVRTTYNYHYEVNNNNNQYSTTSSPS) are compositionally biased toward low complexity. Composition is skewed to polar residues over residues 554–569 (KSLG…SGAS) and 591–611 (GLST…YVQY).

The protein belongs to the protein-tyrosine phosphatase family. Non-receptor class CDC14 subfamily.

It localises to the nucleus. The protein resides in the cytoplasm. It is found in the cytoskeleton. The protein localises to the microtubule organizing center. Its subcellular location is the centrosome. It localises to the spindle pole. The protein resides in the spindle. It is found in the cell projection. The protein localises to the kinocilium. It catalyses the reaction O-phospho-L-tyrosyl-[protein] + H2O = L-tyrosyl-[protein] + phosphate. It carries out the reaction O-phospho-L-seryl-[protein] + H2O = L-seryl-[protein] + phosphate. The catalysed reaction is O-phospho-L-threonyl-[protein] + H2O = L-threonyl-[protein] + phosphate. Functionally, dual-specificity phosphatase. Required for centrosome separation and productive cytokinesis during cell division. Dephosphorylates SIRT2 around early anaphase. May dephosphorylate the APC subunit FZR1/CDH1, thereby promoting APC-FZR1 dependent degradation of mitotic cyclins and subsequent exit from mitosis. This chain is Dual specificity protein phosphatase CDC14AB (cdc14ab), found in Danio rerio (Zebrafish).